The primary structure comprises 1230 residues: Protein transport protein Sec31A (1230 aa).

WD repeat units follow at residues 4 to 47 (KEID…EIFE), 64 to 111 (SSSH…AGDK), 120 to 160 (KHTG…TPMT), 166 to 206 (QPPE…PIIK), 209 to 254 (DHSN…SPLR), 258 to 298 (NHAR…VLYE), and 301 to 342 (TNTQ…DGLR). An interaction with SEC13 region spans residues 161 to 470 (PGAKTQPPED…IEASQTEFEK (310 aa)). The WD 8; interaction with SEC13 repeat unit spans residues 397–429 (SFSFGGKLVTFESVAVPLQQGAEQQRRQPVFIS). At Arg423 the chain carries Asymmetric dimethylarginine. Ser526 and Ser531 each carry phosphoserine. Residue Lys646 forms a Glycyl lysine isopeptide (Lys-Gly) (interchain with G-Cter in ubiquitin) linkage. Disordered stretches follow at residues 789-905 (QGKP…ASNA) and 924-1104 (MYTA…PIGN). At Ser798 the chain carries Phosphoserine. An interaction with PDCD6 region spans residues 799 to 1123 (SQSPYERQPL…TEKITKKPIP (325 aa)). The ALG-2-binding site motif-2 (ABS-2) signature appears at 841-847 (GFIMQGN). Residues 866-876 (QLPPYPQPQPY) are compositionally biased toward pro residues. Composition is skewed to low complexity over residues 930–940 (ASSPTSSSAAS) and 959–975 (PSSS…GTPP). Polar residues-rich tracts occupy residues 981 to 995 (PASQ…QDQA) and 1033 to 1064 (PIMN…SFPQ). At Thr1171 the chain carries Phosphothreonine. A Phosphoserine modification is found at Ser1173. Lys1227 is covalently cross-linked (Glycyl lysine isopeptide (Lys-Gly) (interchain with G-Cter in ubiquitin)).

This sequence belongs to the WD repeat SEC31 family. COPII is composed of at least 5 proteins: the SEC23/24 complex, the SEC13/31 complex and SAR1. SEC13 and SEC31 make a 2:2 tetramer that forms the edge element of the COPII outer coat. The tetramer self-assembles in multiple copies to form the complete polyhedral cage. Interacts (via WD 8) with SEC13. Interacts with PDCD6; interaction takes place in response to cytosolic calcium increase and leads to bridge together the BCR(KLHL12) complex and SEC31A, leading to monoubiquitination. Interacts with KLHL12. Monoubiquitinated by the BCR(KLHL12) E3 ubiquitin ligase complex, leading to regulate the size of COPII coats.

The protein resides in the cytoplasm. Its subcellular location is the cytoplasmic vesicle. It is found in the COPII-coated vesicle membrane. It localises to the endoplasmic reticulum membrane. Component of the coat protein complex II (COPII) which promotes the formation of transport vesicles from the endoplasmic reticulum (ER). The coat has two main functions, the physical deformation of the endoplasmic reticulum membrane into vesicles and the selection of cargo molecules. This Mus musculus (Mouse) protein is Protein transport protein Sec31A (Sec31a).